Reading from the N-terminus, the 201-residue chain is Adenylyl-sulfate kinase (201 aa).

35-42 (GLSGSGKS) contacts ATP. The active-site Phosphoserine intermediate is serine 109.

The protein belongs to the APS kinase family.

It catalyses the reaction adenosine 5'-phosphosulfate + ATP = 3'-phosphoadenylyl sulfate + ADP + H(+). Its pathway is sulfur metabolism; hydrogen sulfide biosynthesis; sulfite from sulfate: step 2/3. Its function is as follows. Catalyzes the synthesis of activated sulfate. This Salmonella paratyphi A (strain AKU_12601) protein is Adenylyl-sulfate kinase.